We begin with the raw amino-acid sequence, 126 residues long: Nascent polypeptide-associated complex protein (126 aa).

Residues 10-77 enclose the NAC-A/B domain; sequence PRMMKQMQKM…AKKVAKAEEK (68 aa).

Belongs to the NAC-alpha family. In terms of assembly, homodimer. Interacts with the ribosome. Binds ribosomal RNA.

Its function is as follows. Contacts the emerging nascent chain on the ribosome. The chain is Nascent polypeptide-associated complex protein from Methanococcus maripaludis (strain C5 / ATCC BAA-1333).